A 395-amino-acid chain; its full sequence is Octopamine receptor beta-2R (395 aa).

The Extracellular portion of the chain corresponds to 1–42 (MDPINGSHSGANATISDITNGAYNATDAGEWTSSVMFKLRTC). Residues asparagine 5, asparagine 12, and asparagine 24 are each glycosylated (N-linked (GlcNAc...) asparagine). Residues 43–63 (VLLLIVIMAVLGNMLVIVSVM) traverse the membrane as a helical segment. The Cytoplasmic segment spans residues 64–74 (RHRKLRVITNY). Residues 75 to 95 (FVVSLAFADILVAMVVMPFNF) traverse the membrane as a helical segment. Topologically, residues 96–117 (SVQFNQGWVFGETICDLWNSSD) are extracellular. A glycan (N-linked (GlcNAc...) asparagine) is linked at asparagine 114. The chain crosses the membrane as a helical span at residues 118–140 (VYFTSTSILHLCCISVDRYYAIV). Residues 141-154 (KPLKYPIKMTKKMA) lie on the Cytoplasmic side of the membrane. A helical transmembrane segment spans residues 155-175 (FVMLAATWLSPITISYVPIFM). Residues 176–202 (GWYTTTDFLESRRDDQCEFKVNKPYAV) lie on the Extracellular side of the membrane. The chain crosses the membrane as a helical span at residues 203-223 (ISSSISFWIPCTIMIFTYLAI). The Cytoplasmic segment spans residues 224–282 (FKEANRQEKALHARAGNAMLMHRHSREVSDKNGALHINATTPTKDRNLLKMKREHKAAR). Residues 283-303 (TLGIIMGAFILCWLPFFLYYV) traverse the membrane as a helical segment. At 304–315 (STSLCDSCNCPE) the chain is on the extracellular side. A helical transmembrane segment spans residues 316–336 (VVTVIMFWTGYFNSALNPIIY). The Cytoplasmic portion of the chain corresponds to 337–395 (AYFNRDFRNAFKNTLACAFCSFCKRSASDLDAMERLDRRGSAQLRVPIPSRRASDLASL).

The protein belongs to the G-protein coupled receptor 1 family.

The protein localises to the cell membrane. In terms of biological role, autoreceptor for octopamine, which is a neurotransmitter, neurohormone, and neuromodulator in invertebrates. Also acts as a receptor for tyramine, but with much less potency. The activity of this receptor is mediated by G proteins which activate adenylyl cyclase. The protein is Octopamine receptor beta-2R of Chilo suppressalis (Asiatic rice borer moth).